The chain runs to 155 residues: Ribosomal RNA large subunit methyltransferase H (155 aa).

Residues Leu-72, Gly-103, and Leu-122 to Leu-127 each bind S-adenosyl-L-methionine.

Belongs to the RNA methyltransferase RlmH family. Homodimer.

It localises to the cytoplasm. It carries out the reaction pseudouridine(1915) in 23S rRNA + S-adenosyl-L-methionine = N(3)-methylpseudouridine(1915) in 23S rRNA + S-adenosyl-L-homocysteine + H(+). In terms of biological role, specifically methylates the pseudouridine at position 1915 (m3Psi1915) in 23S rRNA. In Klebsiella pneumoniae (strain 342), this protein is Ribosomal RNA large subunit methyltransferase H.